The primary structure comprises 74 residues: Molt-inhibiting hormone (74 aa).

Position 1 is a pyrrolidone carboxylic acid (Gln-1). Disulfide bonds link Cys-7-Cys-43, Cys-23-Cys-39, and Cys-26-Cys-52. At Val-72 the chain carries Valine amide.

It is found in the secreted. Functionally, inhibits Y-organs where molting hormone (ecdysteroid) is secreted. A molting cycle is initiated when MIH secretion diminishes or stops. This Procambarus bouvieri (Mexican crayfish) protein is Molt-inhibiting hormone.